The primary structure comprises 714 residues: FERM domain-containing protein 7 (714 aa).

Positions 2 to 282 constitute an FERM domain; that stretch reads LHLKVQFLDD…EYHAFFRLSE (281 aa). Residues 537-558 are a coiled coil; the sequence is NIRMKSFQQDLQVLQEAIARTS.

Expressed in liver, kidney, pancreas and at low levels in brain and heart. Expressed in embryonic brain and developing neural retina.

The protein localises to the cell projection. It is found in the neuron projection. It localises to the growth cone. Functionally, plays a role in neurite development, may be through the activation of the GTPase RAC1. Plays a role in the control of eye movement and gaze stability. The sequence is that of FERM domain-containing protein 7 (FRMD7) from Homo sapiens (Human).